The following is a 341-amino-acid chain: Major histocompatibility complex class I-related protein 1 (341 aa).

An N-terminal signal peptide occupies residues 1-22; sequence MGELMAFLLPLIIVLMVKHSDS. The tract at residues 23–109 is alpha-1; the sequence is RTHSLRYFRL…KRLQRHYNHS (87 aa). Residues 23–201 are antigen-binding cleft; it reads RTHSLRYFRL…EYGKDTLQRT (179 aa). Over 23 to 302 the chain is Extracellular; that stretch reads RTHSLRYFRL…QESETIPLVM (280 aa). Residues R31, S46, and K65 each contribute to the 5-(2-oxoethylideneamino)-6-(D-ribitylamino)uracil site. The 5-(2-oxopropylideneamino)-6-(D-ribitylamino)uracil site is built by R31, S46, and K65. 7-hydroxy-6-methyl-8-(1-D-ribityl)lumazine contacts are provided by R31, S46, and K65. R31 provides a ligand contact to 8-(9H-purin-6-yl)-2-oxa-8-azabicyclo[3.3.1]nona-3,6-diene-4,6-dicarbaldehyde. 2 residues coordinate 8-(9H-purin-6-yl)-2-oxa-8-azabicyclo[3.3.1]nona-3,6-diene-4,6-dicarbaldehyde: K65 and H80. K65 contacts 2-amino-4-oxopteridine-6-carbaldehyde. Pyridoxal is bound at residue K65. An N-linked (GlcNAc...) asparagine glycan is attached at N107. The alpha-2 stretch occupies residues 110–201; sequence GSHTYQRMIG…EYGKDTLQRT (92 aa). 5-(2-oxoethylideneamino)-6-(D-ribitylamino)uracil-binding residues include R116, Y174, and Q175. R116, Y174, and Q175 together coordinate 5-(2-oxopropylideneamino)-6-(D-ribitylamino)uracil. Residues R116, Y174, and Q175 each coordinate 7-hydroxy-6-methyl-8-(1-D-ribityl)lumazine. R116 lines the 8-(9H-purin-6-yl)-2-oxa-8-azabicyclo[3.3.1]nona-3,6-diene-4,6-dicarbaldehyde pocket. Intrachain disulfides connect C120–C183 and C222–C278. Positions 202 to 293 are alpha-3; the sequence is EPPLVRVNRK…GVHMVLQVPQ (92 aa). The Ig-like C1-type domain maps to 203–299; it reads PPLVRVNRKE…QVPQESETIP (97 aa). The tract at residues 294–302 is connecting peptide; it reads ESETIPLVM. Residues 303 to 323 form a helical membrane-spanning segment; sequence KAVSGSIVLVIVLAGVGVLVW. Over 324–341 the chain is Cytoplasmic; sequence RRRPREQNGAIYLPTPDR.

The protein belongs to the MHC class I family. Heterotrimer that consists of MR1, B2M and a metabolite antigen. Major classes of metabolite ligands presented by MR1 include riboflavin-related antigens, pyrimidines and ribityl lumazines, nucleobase adducts and folate derivatives. Forms reversible covalent Schiff base complexes with microbial pyrimidine-based metabolite, which serves as a molecular switch triggering complete folding, stable association with B2M and translocation of the ternary complex from endoplasmic reticulum to the plasma membrane. Alternatively, forms non-Schiff base complexes with ribityl lumazines. On antigen-presenting cells, the ternary complex interacts with TCR on MR1-restricted T cells, predominantly represented by CD8-positive and CD4- and CD8-double negative MAIT cell subsets. Interacts with TAPBP and TAPBPL chaperones in the endoplasmic reticulum. TAPBP associated or not with MHC class I peptide loading complex binds ligand-free MR1 or MR1-B2M complex, providing for stable MR1 pools ready for metabolite antigen processing. TAPBPL interacts with MR1 in a ligand-independent way; this interaction may stabilize MR1 pool and facilitate ligand loading and dissociation. MR1-B2M heterodimer adopts a topology similar to classical MHC class I molecules, with alpha-1 and alpha-2 domains of MR1 forming the antigen-binding cleft composed of two alpha-helices resting on a floor of 7-stranded anti-parallel beta-pleated sheet. The ribityl moiety of pyrimidine-based antigens is recognized by Tyr-95 residue in the CDR3 alpha loop of the invariant TRAV1-2 TCR. As to quaternary structure, homodimerizes and does not associate with B2M. Post-translationally, N-glycosylated. As to expression, ubiquitous. Low expression is detected in peripheral blood B cells, T cells, monocytes and in bronchial epithelial cells (at protein level). Expressed in plasmablasts or plasma B cells in the lamina propria of ileum, appendix and colon (at protein level). Highly expressed on a subset of CD45-positive CD3-positive thymocytes (at protein level).

Its subcellular location is the cell membrane. It is found in the endoplasmic reticulum membrane. The protein resides in the golgi apparatus membrane. It localises to the early endosome membrane. The protein localises to the late endosome membrane. Its subcellular location is the secreted. Its activity is regulated as follows. Inhibited by pterin-based metabolites such as 6-formylpterin (6-FP, a product of folic acid photodegradation). 6-FP competitively inhibits MAIT cell activation by 5-OP-RU. Modulated by commonly prescribed anti-inflammatory drug metabolites. Inhibited by salicilates such as 3-formylsalicylic and 5-formylsalicylic acids. Activated by diclofenac and/or its hydroxy metabolites. In terms of biological role, antigen-presenting molecule specialized in displaying microbial pyrimidine-based metabolites to alpha-beta T cell receptors (TCR) on innate-type mucosal-associated invariant T (MAIT) cells. In complex with B2M preferentially presents riboflavin-derived metabolites to semi-invariant TRAV1.2 TCRs on MAIT cells, guiding immune surveillance of the microbial metabolome at mucosal epithelial barriers. Signature pyrimidine-based microbial antigens are generated via non-enzymatic condensation of metabolite intermediates of the riboflavin pathway with by-products arising from other metabolic pathways such as glycolysis. Typical potent antigenic metabolites are 5-(2-oxoethylideneamino)-6-D-ribitylaminouracil (5-OE-RU) and 5-(2-oxopropylideneamino)-6-D-ribitylaminouracil (5-OP-RU), products of condensation of 5-amino-6-D-ribityaminouracil (5-A-RU) with glyoxal or methylglyoxal by-products, respectively. May present microbial antigens to various TRAV1-2-negative MAIT cell subsets, providing for unique recognition of diverse microbes, including pathogens that do not synthesize riboflavin. Upon antigen recognition, elicits rapid innate-type MAIT cell activation to eliminate pathogenic microbes by directly killing infected cells. During T cell development, drives thymic selection and post-thymic terminal differentiation of MAIT cells in a process dependent on commensal microflora. Acts as an immune sensor of cancer cell metabolome. May present a tumor-specific or -associated metabolite essential for cancer cell survival to a 'pan-cancer' TCR consisting of TRAV38.2-DV8*TRAJ31 alpha chain paired with a TRBV25.1*TRBJ2.3 beta chain on a non-MAIT CD8-positive T cell clone (MC.7.G5), triggering T cell-mediated killing of a wide range of cancer cell types. Allele MR1*01: Presents microbial-derived metabolite 5-OP-RU to semi-invariant TRAV1.2-TRAJ33-TRBV6.1 (A-F7) TCR on MAIT cells. Presents nucleobase carbonyl adducts generated during oxidative stress. Captures M3Ade, a nucleobase adduct composed of one adenine modified by a malondialdehyde trimer, for recognition by MR1-restricted T cell clones expressing a polyclonal TCR repertoire. Displays moderate binding affinity toward tumor-enriched pyridoxal and pyridoxal 5'-phosphate antigens. Functionally, allele MR1*04: Presents tumor-enriched metabolite pyridoxal to pan-cancer 7.G5 TCR on T cells enabling preferential recognition of cancer cells. May act as an alloantigen. The sequence is that of Major histocompatibility complex class I-related protein 1 from Homo sapiens (Human).